Consider the following 211-residue polypeptide: tRNA (guanine-N(7)-)-methyltransferase (211 aa).

S-adenosyl-L-methionine contacts are provided by Glu44, Asp69, Asp96, and Asp118. Asp118 is an active-site residue. Residue Lys122 coordinates substrate. Residues 124-129 form an interaction with RNA region; that stretch reads KHEKRR. Residues Asp154 and 191-194 each bind substrate; that span reads TEYE.

The protein belongs to the class I-like SAM-binding methyltransferase superfamily. TrmB family.

It catalyses the reaction guanosine(46) in tRNA + S-adenosyl-L-methionine = N(7)-methylguanosine(46) in tRNA + S-adenosyl-L-homocysteine. It participates in tRNA modification; N(7)-methylguanine-tRNA biosynthesis. Functionally, catalyzes the formation of N(7)-methylguanine at position 46 (m7G46) in tRNA. This chain is tRNA (guanine-N(7)-)-methyltransferase, found in Streptococcus pyogenes serotype M18 (strain MGAS8232).